A 657-amino-acid chain; its full sequence is Autophagy-related protein 22 (657 aa).

Positions 1–15 (MAPNLQPQPQSQLQR) are enriched in low complexity. The segment at 1–78 (MAPNLQPQPQ…VVPRHFGHDA (78 aa)) is disordered. Residues 1–91 (MAPNLQPQPQ…SRRELLGWYA (91 aa)) lie on the Cytoplasmic side of the membrane. A compositionally biased stretch (polar residues) spans 26 to 40 (GLSNISKRSFRSCAT). A helical membrane pass occupies residues 92–112 (YAFAAETYVICGIASFIPILL). Residues 113 to 155 (ETLARENGVLVSDRKTPCGSSDSKNDGDGQCIVWVFGMEINTA) lie on the Vacuolar side of the membrane. The chain crosses the membrane as a helical span at residues 156–176 (SFAMYTFSVSVLVQALLVVSI). Over 177–187 (SCAADHGNYRK) the chain is Cytoplasmic. Residues 188–208 (KLLLTFAWIGSFAVMSYIFIT) traverse the membrane as a helical segment. The Vacuolar portion of the chain corresponds to 209-212 (KDNY). The chain crosses the membrane as a helical span at residues 213 to 233 (ILGALLTVISNTSFGASFVLL). The Cytoplasmic portion of the chain corresponds to 234-317 (NSFLPLLVRY…ELELSTRISA (84 aa)). The helical transmembrane segment at 318-338 (IGIGTGYIAALFLQCICIGVL) threads the bilayer. Over 339–349 (ISLHNTTWGQR) the chain is Vacuolar. An N-linked (GlcNAc...) asparagine glycan is attached at Asn-343. A helical transmembrane segment spans residues 350–370 (VVLFMVGVWWTVFTIPAAMWL). Residues 371-384 (RPRPGPPLADNGRK) are Cytoplasmic-facing. A helical membrane pass occupies residues 385-405 (GIMAGLAYILYAWKSLFKTIQ). Residues 406 to 409 (QARR) are Vacuolar-facing. Residues 410–430 (LLDIVLFLAGWFLLSDAIATT) form a helical membrane-spanning segment. Residues 431–446 (SSTAILFAKTQLHMKP) lie on the Cytoplasmic side of the membrane. The helical transmembrane segment at 447–467 (WALGMINVISTTAGVFGAFGW) threads the bilayer. Topologically, residues 468-481 (SWVSRLFNLKAHQT) are vacuolar. Residues 482 to 502 (ILVCIALFELIPLYGLLGYLP) traverse the membrane as a helical segment. Topologically, residues 503 to 515 (FVKNWGVFGLQQP) are cytoplasmic. A helical transmembrane segment spans residues 516–536 (WEMYPLAAVYGVVLGGLSGYC). At 537-554 (RSLYGELIPPGSEAAFYA) the chain is on the vacuolar side. A helical transmembrane segment spans residues 555–575 (LYAITDKGSSVFGPTIVGAII). At 576-583 (DRTGTIRP) the chain is on the cytoplasmic side. The helical transmembrane segment at 584–604 (AFWFLAVLVGFPAPLIWFIDV) threads the bilayer. Residues 605 to 657 (ERGRREGAKLAKSITDSIVQEEDESDDGAERRGMLSDYEREHGQSIDDERAGR) lie on the Vacuolar side of the membrane. The disordered stretch occupies residues 615 to 657 (AKSITDSIVQEEDESDDGAERRGMLSDYEREHGQSIDDERAGR). Over residues 632-657 (GAERRGMLSDYEREHGQSIDDERAGR) the composition is skewed to basic and acidic residues.

It belongs to the ATG22 family.

It is found in the vacuole membrane. Vacuolar effluxer which mediate the efflux of leucine and other amino acids resulting from autophagic degradation. The release of autophagic amino acids allows the maintenance of protein synthesis and viability during nitrogen starvation. Autophagy is required for proper vegetative growth, asexual/sexual reproduction, and full virulence. Autophagy is particularly involved in the biosynthesis of deoxynivalenol (DON), an important virulence determinant. The chain is Autophagy-related protein 22 from Gibberella zeae (strain ATCC MYA-4620 / CBS 123657 / FGSC 9075 / NRRL 31084 / PH-1) (Wheat head blight fungus).